The sequence spans 414 residues: Putative transporter AmpG 4 (414 aa).

A run of 12 helical transmembrane segments spans residues 15-35 (IFILGIVSGMPLVIIFSTLAV), 44-63 (IAVITTFAVARLSYSLKVFW), 84-104 (WLILCSSLMALVLIAMSKENP), 109-129 (TSFYFLTILLGFLSSTFDIAV), 150-170 (VFGYRIGMLITGAGALYLAEI), 177-197 (LTFCVIAIIFVVATIFIITVN), 230-250 (FAVTILLAVIFFKLGDAMLGA), 268-288 (IIAKLYGLIATLVGGFVGGIV), 295-315 (FKGLIITGIAQSLTHFAFIWL), 324-344 (ALLIAITIENFAAAMGATALV), 360-379 (YALLSSASSLCNNTVTIYAG), and 389-409 (GFFLFTIILALPALFILMYLN).

Belongs to the major facilitator superfamily.

It localises to the cell inner membrane. The chain is Putative transporter AmpG 4 (ampG4) from Rickettsia conorii (strain ATCC VR-613 / Malish 7).